A 154-amino-acid polypeptide reads, in one-letter code: SsrA-binding protein (154 aa).

The protein belongs to the SmpB family.

The protein resides in the cytoplasm. Its function is as follows. Required for rescue of stalled ribosomes mediated by trans-translation. Binds to transfer-messenger RNA (tmRNA), required for stable association of tmRNA with ribosomes. tmRNA and SmpB together mimic tRNA shape, replacing the anticodon stem-loop with SmpB. tmRNA is encoded by the ssrA gene; the 2 termini fold to resemble tRNA(Ala) and it encodes a 'tag peptide', a short internal open reading frame. During trans-translation Ala-aminoacylated tmRNA acts like a tRNA, entering the A-site of stalled ribosomes, displacing the stalled mRNA. The ribosome then switches to translate the ORF on the tmRNA; the nascent peptide is terminated with the 'tag peptide' encoded by the tmRNA and targeted for degradation. The ribosome is freed to recommence translation, which seems to be the essential function of trans-translation. This is SsrA-binding protein from Acetivibrio thermocellus (strain ATCC 27405 / DSM 1237 / JCM 9322 / NBRC 103400 / NCIMB 10682 / NRRL B-4536 / VPI 7372) (Clostridium thermocellum).